Here is a 254-residue protein sequence, read N- to C-terminus: 5-oxoprolinase subunit A (254 aa).

This sequence belongs to the LamB/PxpA family. Forms a complex composed of PxpA, PxpB and PxpC.

It catalyses the reaction 5-oxo-L-proline + ATP + 2 H2O = L-glutamate + ADP + phosphate + H(+). Catalyzes the cleavage of 5-oxoproline to form L-glutamate coupled to the hydrolysis of ATP to ADP and inorganic phosphate. The sequence is that of 5-oxoprolinase subunit A from Brevibacillus brevis (strain 47 / JCM 6285 / NBRC 100599).